The sequence spans 759 residues: MPLTARAGHTLHRLPLSHYWWLLLGRHSLRHVHSYLRLRKGLRLPLPWPEQECLHLHPKPYKFLLRYPCLTRQPHLLQGWPADSSLWFDPKPYHPSADSKLLPLGLITLSAFSMRVSEPTHCSGFHAADPSLSWLTGSSPWLVLLQAPGGSLFCHDVFQGRLYLLSHSVSLFLKTGLRQCEAIYRAPLWRVRPLPSLWTCRDPDTAFLPKLLARTARRGLAAFYALWRLHLGSRSELSHPVLEWERTELVLTDRRRGWPCTHLLSGSESQRVSSSDAGDTWNAATEKAAGGKEEAERGGRQQATDRLASPHLTRGRRDCGRSLQGEEPSAAEDFARCRPLLDELCGEGGWLPFAFLTASPHVCLILTEGGPVLALDLNDTSLWRIADDLELLLRLGSLLLLSGLRLPLRPPSGSGEAARKPGYEKEEGRGRATTASATAATSPRRPTRPRGVTEKGRVTTGDVPFSAHPESEEQTDGHHGRQESGHGDQRGGDGRGHRDDGARRHANDETEPQQRGEHEDGEQTDSGREEDAQESEVARRDEKGTEQGGSGRSCGRATQTYGGRGEHGAWSSIPLSVPRPDPRVWVPPPHLLFPSPLPSITPVEDEPSARPRCPPGPAEEPSKCSPCPPCPSPDAPQSAVPRLSALSVPSPSTARVRFSLSSLSSSSSSSSSSSPSYSPSPLSPPSPVSPSSPRSPFISPIRSPGLRAKPWVSSGHPVAFPPAPSSAPPFSKRVPSVPSSASPSAPCIGRSRPPSAQTA.

2 disordered regions span residues 269-328 (SQRV…GEEP) and 406-759 (LPLR…AQTA). A compositionally biased stretch (basic and acidic residues) spans 289 to 299 (AGGKEEAERGG). A compositionally biased stretch (low complexity) spans 406–415 (LPLRPPSGSG). Residues 417–430 (AARKPGYEKEEGRG) show a composition bias toward basic and acidic residues. Residues 431-444 (RATTASATAATSPR) show a composition bias toward low complexity. 2 stretches are compositionally biased toward basic and acidic residues: residues 469-518 (PESE…RGEH) and 525-545 (DSGR…EKGT). Residues 585–599 (WVPPPHLLFPSPLPS) are compositionally biased toward pro residues. The segment covering 659–680 (SLSSLSSSSSSSSSSSPSYSPS) has biased composition (low complexity). Residues 681 to 690 (PLSPPSPVSP) show a composition bias toward pro residues. 2 stretches are compositionally biased toward low complexity: residues 691–704 (SSPR…IRSP) and 728–746 (PPFS…PSAP).

This is an uncharacterized protein from Human herpesvirus 6B (strain Z29) (HHV-6 variant B).